We begin with the raw amino-acid sequence, 439 residues long: Secreted aspartic protease FUS4 (439 aa).

Residues 1 to 22 (MLTIATLHVALQVFGAFSPSHA) form the signal peptide. The region spanning 49–434 (YLFNVTVGSP…NFEDRSFGLA (386 aa)) is the Peptidase A1 domain. N-linked (GlcNAc...) asparagine glycosylation is found at Asn-52 and Asn-61. Residue Asp-67 is part of the active site. N-linked (GlcNAc...) asparagine glycosylation is found at Asn-101, Asn-107, and Asn-123. Asp-296 is a catalytic residue. Cys-352 and Cys-390 are joined by a disulfide.

The protein belongs to the peptidase A1 family.

It is found in the secreted. Functionally, secreted aspartic protease; part of the gene cluster that mediates the biosynthesis of the mycotoxin fusarin C. Within the cluster, FUS1, FUS2, FUS8 and FUS9 are sufficient for fusarin production. The other FUS cluster members are not essential for fusarin C biosynthesis. This chain is Secreted aspartic protease FUS4, found in Gibberella moniliformis (strain M3125 / FGSC 7600) (Maize ear and stalk rot fungus).